The following is a 135-amino-acid chain: Ig heavy chain V region XIG14 (135 aa).

Residues 1–18 form the signal peptide; sequence DFIIFFIFMFFSPSCILS. One can recognise an Ig-like domain in the interval 20-128; that stretch reads TLQESGPGTV…GYNFDYWGQG (109 aa).

This chain is Ig heavy chain V region XIG14, found in Xenopus laevis (African clawed frog).